The following is a 113-amino-acid chain: Hydrogenase maturation factor HypA (113 aa).

His2 is a Ni(2+) binding site. Residues Cys73, Cys76, Cys89, and Cys92 each coordinate Zn(2+).

It belongs to the HypA/HybF family.

Involved in the maturation of [NiFe] hydrogenases. Required for nickel insertion into the metal center of the hydrogenase. The chain is Hydrogenase maturation factor HypA from Beijerinckia indica subsp. indica (strain ATCC 9039 / DSM 1715 / NCIMB 8712).